A 307-amino-acid chain; its full sequence is Acetyl-coenzyme A carboxylase carboxyl transferase subunit beta (307 aa).

The 270-residue stretch at 28–297 (LWVKCPDTGQ…TPEPGTAPEP (270 aa)) folds into the CoA carboxyltransferase N-terminal domain. A disordered region spans residues 286-307 (RRTPEPGTAPEPTTPEPLPNAA). Over residues 292–307 (GTAPEPTTPEPLPNAA) the composition is skewed to pro residues.

It belongs to the AccD/PCCB family. In terms of assembly, acetyl-CoA carboxylase is a heterohexamer composed of biotin carboxyl carrier protein (AccB), biotin carboxylase (AccC) and two subunits each of ACCase subunit alpha (AccA) and ACCase subunit beta (AccD).

It localises to the cytoplasm. The enzyme catalyses N(6)-carboxybiotinyl-L-lysyl-[protein] + acetyl-CoA = N(6)-biotinyl-L-lysyl-[protein] + malonyl-CoA. Its pathway is lipid metabolism; malonyl-CoA biosynthesis; malonyl-CoA from acetyl-CoA: step 1/1. Functionally, component of the acetyl coenzyme A carboxylase (ACC) complex. Biotin carboxylase (BC) catalyzes the carboxylation of biotin on its carrier protein (BCCP) and then the CO(2) group is transferred by the transcarboxylase to acetyl-CoA to form malonyl-CoA. This Methylorubrum extorquens (strain ATCC 14718 / DSM 1338 / JCM 2805 / NCIMB 9133 / AM1) (Methylobacterium extorquens) protein is Acetyl-coenzyme A carboxylase carboxyl transferase subunit beta.